The sequence spans 446 residues: Exodeoxyribonuclease 7 large subunit (446 aa).

The protein belongs to the XseA family. Heterooligomer composed of large and small subunits.

It is found in the cytoplasm. It catalyses the reaction Exonucleolytic cleavage in either 5'- to 3'- or 3'- to 5'-direction to yield nucleoside 5'-phosphates.. Its function is as follows. Bidirectionally degrades single-stranded DNA into large acid-insoluble oligonucleotides, which are then degraded further into small acid-soluble oligonucleotides. This is Exodeoxyribonuclease 7 large subunit from Streptococcus pneumoniae (strain ATCC BAA-255 / R6).